Reading from the N-terminus, the 346-residue chain is MASLGRQVPEWHRLLALSWACLVRQTPHLREQKQMSPSLSCKLTTVPGRGSFQEFSSITPQKYMQEPENRTRLVQCLHEEQKPCVDPESLEPEKVIRSLQDMGFAEAHIHSLFSIQPSVHPQQLLGIVSELLLLGLNPEPVFNALKKNPQLLKLSSMQMKRRSSYLRKLGLGEGKLKRVLSVCPEVFTMHQRDIDRVVKVLREKCLFTAQHITDVLHRCPTVLQEDPNELEYKFQYAYFRMGLTHLDIVRTNFLQYSITKIKQRHIYLERLGRYQTPDKKGQTQIPNPSLRNILRVSEAEFLARTACSSVEEFQVFKKLLDQEEEEESESHASEEEEEEEEEEELL.

The N-terminal 42 residues, 1-42 (MASLGRQVPEWHRLLALSWACLVRQTPHLREQKQMSPSLSCK), are a transit peptide targeting the mitochondrion. 5 MTERF repeats span residues 142-172 (FNAL…LGLG), 177-204 (KRVL…LREK), 209-239 (AQHI…YAYF), 245-270 (HLDI…YLER), and 290-318 (LRNI…VFKK). Residues 310–327 (VEEFQVFKKLLDQEEEEE) form a dimerization with NSUN4 region. Positions 321–346 (DQEEEEESESHASEEEEEEEEEEELL) are disordered. Positions 322–346 (QEEEEESESHASEEEEEEEEEEELL) are enriched in acidic residues.

Belongs to the mTERF family. As to quaternary structure, heterodimer with NSUN4; this interaction may be required for NSUN4 recruitment to the mitochondrial large ribosomal subunit. Widely expressed, with highest levels in liver, followed by testis, kidney and brain.

The protein localises to the mitochondrion. In terms of biological role, regulator of mitochondrial ribosome biogenesis and translation. Binds to mitochondrial ribosomal RNAs 16S, 12S and 7S. Targets NSUN4 RNA methyltransferase to the mitochondrial large ribosomal subunit. The chain is Transcription termination factor 4, mitochondrial (Mterf4) from Mus musculus (Mouse).